The sequence spans 362 residues: Chorismate synthase (362 aa).

Residue Arg-46 coordinates NADP(+). Residues 122-124 (RSS), 238-239 (NA), Gly-278, 293-297 (KPTPS), and Arg-319 contribute to the FMN site.

The protein belongs to the chorismate synthase family. Homotetramer. Requires FMNH2 as cofactor.

The catalysed reaction is 5-O-(1-carboxyvinyl)-3-phosphoshikimate = chorismate + phosphate. Its pathway is metabolic intermediate biosynthesis; chorismate biosynthesis; chorismate from D-erythrose 4-phosphate and phosphoenolpyruvate: step 7/7. Catalyzes the anti-1,4-elimination of the C-3 phosphate and the C-6 proR hydrogen from 5-enolpyruvylshikimate-3-phosphate (EPSP) to yield chorismate, which is the branch point compound that serves as the starting substrate for the three terminal pathways of aromatic amino acid biosynthesis. This reaction introduces a second double bond into the aromatic ring system. The protein is Chorismate synthase of Campylobacter jejuni subsp. jejuni serotype O:23/36 (strain 81-176).